Consider the following 361-residue polypeptide: Histidinol-phosphate aminotransferase (361 aa).

Positions 26–45 (GMDPEDLTKLSSNENPHGPS) are disordered. Residue K222 is modified to N6-(pyridoxal phosphate)lysine.

Belongs to the class-II pyridoxal-phosphate-dependent aminotransferase family. Histidinol-phosphate aminotransferase subfamily. Requires pyridoxal 5'-phosphate as cofactor.

It catalyses the reaction L-histidinol phosphate + 2-oxoglutarate = 3-(imidazol-4-yl)-2-oxopropyl phosphate + L-glutamate. It participates in amino-acid biosynthesis; L-histidine biosynthesis; L-histidine from 5-phospho-alpha-D-ribose 1-diphosphate: step 7/9. The polypeptide is Histidinol-phosphate aminotransferase (hisC) (Haloferax volcanii (strain ATCC 29605 / DSM 3757 / JCM 8879 / NBRC 14742 / NCIMB 2012 / VKM B-1768 / DS2) (Halobacterium volcanii)).